A 95-amino-acid polypeptide reads, in one-letter code: Co-chaperonin GroES (95 aa).

It belongs to the GroES chaperonin family. As to quaternary structure, heptamer of 7 subunits arranged in a ring. Interacts with the chaperonin GroEL.

The protein localises to the cytoplasm. In terms of biological role, together with the chaperonin GroEL, plays an essential role in assisting protein folding. The GroEL-GroES system forms a nano-cage that allows encapsulation of the non-native substrate proteins and provides a physical environment optimized to promote and accelerate protein folding. GroES binds to the apical surface of the GroEL ring, thereby capping the opening of the GroEL channel. This is Co-chaperonin GroES from Rickettsia prowazekii (strain Madrid E).